Consider the following 277-residue polypeptide: Probable cyclic nucleotide phosphodiesterase MCR_0369 (277 aa).

Residues Asp17, His19, Asp53, Asn83, His165, His204, and His206 each coordinate Fe cation. Residues His19, Asp53, and 83 to 84 contribute to the AMP site; that span reads NH. His206 contacts AMP.

Belongs to the cyclic nucleotide phosphodiesterase class-III family. It depends on Fe(2+) as a cofactor.

The chain is Probable cyclic nucleotide phosphodiesterase MCR_0369 from Moraxella catarrhalis (strain BBH18).